The chain runs to 422 residues: Exodeoxyribonuclease 7 large subunit (422 aa).

This sequence belongs to the XseA family. Heterooligomer composed of large and small subunits.

The protein localises to the cytoplasm. It carries out the reaction Exonucleolytic cleavage in either 5'- to 3'- or 3'- to 5'-direction to yield nucleoside 5'-phosphates.. Its function is as follows. Bidirectionally degrades single-stranded DNA into large acid-insoluble oligonucleotides, which are then degraded further into small acid-soluble oligonucleotides. The sequence is that of Exodeoxyribonuclease 7 large subunit from Leptospira interrogans serogroup Icterohaemorrhagiae serovar copenhageni (strain Fiocruz L1-130).